The following is a 525-amino-acid chain: GMP synthase [glutamine-hydrolyzing] (525 aa).

The Glutamine amidotransferase type-1 domain maps to 9-207; sequence RILILDFGSQ…VRDICQCEAL (199 aa). Cysteine 86 serves as the catalytic Nucleophile. Catalysis depends on residues histidine 181 and glutamate 183. The 193-residue stretch at 208–400 folds into the GMPS ATP-PPase domain; the sequence is WTPAKIIDDA…LGLPYDMLYR (193 aa). 235-241 is an ATP binding site; that stretch reads SGGVDSS.

In terms of assembly, homodimer.

The catalysed reaction is XMP + L-glutamine + ATP + H2O = GMP + L-glutamate + AMP + diphosphate + 2 H(+). It participates in purine metabolism; GMP biosynthesis; GMP from XMP (L-Gln route): step 1/1. In terms of biological role, catalyzes the synthesis of GMP from XMP. This chain is GMP synthase [glutamine-hydrolyzing], found in Escherichia coli O139:H28 (strain E24377A / ETEC).